A 178-amino-acid chain; its full sequence is MIKWEEASVIEIPKDVKVGLSGTMLSMTFGNKKLEKKFADNYVRLLVEDNKIKIVKSKNNSRERGIVGTWASEISNMVKGLKEGFQYEMKIDYSHFPMRVSVKGKTVVIENFFGERSPRTAEIVGETQVSVKGDRLFLNGPSKKDVGETAANIERATIIKGFDPRVFQDGIYLISKGE.

Belongs to the universal ribosomal protein uL6 family. Part of the 50S ribosomal subunit.

Its function is as follows. This protein binds to the 23S rRNA, and is important in its secondary structure. It is located near the subunit interface in the base of the L7/L12 stalk, and near the tRNA binding site of the peptidyltransferase center. The polypeptide is Large ribosomal subunit protein uL6 (Thermoplasma volcanium (strain ATCC 51530 / DSM 4299 / JCM 9571 / NBRC 15438 / GSS1)).